A 356-amino-acid chain; its full sequence is UDP-N-acetylglucosamine--N-acetylmuramyl-(pentapeptide) pyrophosphoryl-undecaprenol N-acetylglucosamine transferase (356 aa).

Residues 11-13, Asn117, Arg160, Ser188, and Gln290 contribute to the UDP-N-acetyl-alpha-D-glucosamine site; that span reads TGG.

Belongs to the glycosyltransferase 28 family. MurG subfamily.

It localises to the cell inner membrane. The enzyme catalyses di-trans,octa-cis-undecaprenyl diphospho-N-acetyl-alpha-D-muramoyl-L-alanyl-D-glutamyl-meso-2,6-diaminopimeloyl-D-alanyl-D-alanine + UDP-N-acetyl-alpha-D-glucosamine = di-trans,octa-cis-undecaprenyl diphospho-[N-acetyl-alpha-D-glucosaminyl-(1-&gt;4)]-N-acetyl-alpha-D-muramoyl-L-alanyl-D-glutamyl-meso-2,6-diaminopimeloyl-D-alanyl-D-alanine + UDP + H(+). It functions in the pathway cell wall biogenesis; peptidoglycan biosynthesis. Its function is as follows. Cell wall formation. Catalyzes the transfer of a GlcNAc subunit on undecaprenyl-pyrophosphoryl-MurNAc-pentapeptide (lipid intermediate I) to form undecaprenyl-pyrophosphoryl-MurNAc-(pentapeptide)GlcNAc (lipid intermediate II). In Rickettsia bellii (strain RML369-C), this protein is UDP-N-acetylglucosamine--N-acetylmuramyl-(pentapeptide) pyrophosphoryl-undecaprenol N-acetylglucosamine transferase.